A 435-amino-acid polypeptide reads, in one-letter code: MESDSGQPLNNRDIVPFRKPRRPQETFKKVGIPIIAVLLSLIALVIVALLIKVILDKYYFICGSPLTFIQRGQLCDGHLDCASGEDEEHCVKDFPEKPGVAVRLSKDRSTLQVLDAATGTWASVCFDNFTEALAKTACRQMGYDSQPAFRAVEIRPDQNLPVAQVTGNSQELQVQNGSRSCLSGSLVSLRCLDCGKSLKTPRVVGGVEAPVDSWPWQVSIQYNKQHVCGGSILDPHWILTAAHCFRKYLDVSSWKVRAGSNILGNSPSLPVAKIFIAEPNPLYPKEKDIALVKLQMPLTFSGSVRPICLPFSDEVLVPATPVWVIGWGFTEENGGKMSDMLLQASVQVIDSTRCNAEDAYEGEVTAEMLCAGTPQGGKDTCQGDSGGPLMYHSDKWQVVGIVSWGHGCGGPSTPGVYTKVTAYLNWIYNVRKSEM.

Residues 1–30 (MESDSGQPLNNRDIVPFRKPRRPQETFKKV) lie on the Cytoplasmic side of the membrane. The chain crosses the membrane as a helical; Signal-anchor for type II membrane protein span at residues 31 to 51 (GIPIIAVLLSLIALVIVALLI). Residues 52-435 (KVILDKYYFI…WIYNVRKSEM (384 aa)) are Extracellular-facing. An LDL-receptor class A domain is found at 59-101 (YFICGSPLTFIQRGQLCDGHLDCASGEDEEHCVKDFPEKPGVA). Disulfide bonds link Cys-62–Cys-81, Cys-75–Cys-90, Cys-125–Cys-181, Cys-138–Cys-191, Cys-194–Cys-308, Cys-228–Cys-244, Cys-354–Cys-370, and Cys-381–Cys-408. The region spanning 102 to 202 (VRLSKDRSTL…DCGKSLKTPR (101 aa)) is the SRCR domain. N-linked (GlcNAc...) asparagine glycosylation is found at Asn-128 and Asn-176. A Peptidase S1 domain is found at 203-432 (VVGGVEAPVD…YLNWIYNVRK (230 aa)). Active-site charge relay system residues include His-243 and Asp-288. Catalysis depends on Ser-385, which acts as the Charge relay system.

This sequence belongs to the peptidase S1 family. Post-translationally, proteolytically processed; probably by an autocatalytic mechanism.

Its subcellular location is the cell membrane. It localises to the secreted. Plasma membrane-anchored serine protease that directly induces processing of pro-uPA/PLAU into the active form through proteolytic activity. Seems to be capable of activating ENaC. This is Transmembrane protease serine 4 from Mus musculus (Mouse).